A 105-amino-acid chain; its full sequence is Nucleoid-associated protein cu1912 (105 aa).

This sequence belongs to the YbaB/EbfC family. Homodimer.

The protein localises to the cytoplasm. The protein resides in the nucleoid. Its function is as follows. Binds to DNA and alters its conformation. May be involved in regulation of gene expression, nucleoid organization and DNA protection. The polypeptide is Nucleoid-associated protein cu1912 (Corynebacterium urealyticum (strain ATCC 43042 / DSM 7109)).